The chain runs to 490 residues: Aspartyl/glutamyl-tRNA(Asn/Gln) amidotransferase subunit B (490 aa).

It belongs to the GatB/GatE family. GatB subfamily. As to quaternary structure, heterotrimer of A, B and C subunits.

It catalyses the reaction L-glutamyl-tRNA(Gln) + L-glutamine + ATP + H2O = L-glutaminyl-tRNA(Gln) + L-glutamate + ADP + phosphate + H(+). The catalysed reaction is L-aspartyl-tRNA(Asn) + L-glutamine + ATP + H2O = L-asparaginyl-tRNA(Asn) + L-glutamate + ADP + phosphate + 2 H(+). Allows the formation of correctly charged Asn-tRNA(Asn) or Gln-tRNA(Gln) through the transamidation of misacylated Asp-tRNA(Asn) or Glu-tRNA(Gln) in organisms which lack either or both of asparaginyl-tRNA or glutaminyl-tRNA synthetases. The reaction takes place in the presence of glutamine and ATP through an activated phospho-Asp-tRNA(Asn) or phospho-Glu-tRNA(Gln). This is Aspartyl/glutamyl-tRNA(Asn/Gln) amidotransferase subunit B from Burkholderia pseudomallei (strain 1106a).